A 504-amino-acid chain; its full sequence is Beta-glucosidase 24 (504 aa).

An N-terminal signal peptide occupies residues 1-18; it reads MELLWLLLLLLMASSTSS. Residue Q47 participates in a beta-D-glucoside binding. N-linked (GlcNAc...) asparagine glycosylation occurs at N75. A beta-D-glucoside-binding positions include H151 and 196 to 197; that span reads NE. The active-site Proton donor is the E197. The cysteines at positions 216 and 224 are disulfide-linked. A glycan (N-linked (GlcNAc...) asparagine) is linked at N329. Residue Y340 coordinates a beta-D-glucoside. N-linked (GlcNAc...) asparagine glycosylation occurs at N371. E411 contacts a beta-D-glucoside. The active-site Nucleophile is E411. An N-linked (GlcNAc...) asparagine glycan is attached at N421. A beta-D-glucoside-binding positions include W460, 467-468, and F476; that span reads EW.

This sequence belongs to the glycosyl hydrolase 1 family.

It catalyses the reaction Hydrolysis of terminal, non-reducing beta-D-glucosyl residues with release of beta-D-glucose.. The polypeptide is Beta-glucosidase 24 (BGLU24) (Oryza sativa subsp. japonica (Rice)).